The following is a 119-amino-acid chain: Holo-[acyl-carrier-protein] synthase (119 aa).

Mg(2+)-binding residues include D7 and E56.

This sequence belongs to the P-Pant transferase superfamily. AcpS family. Mg(2+) is required as a cofactor.

Its subcellular location is the cytoplasm. It catalyses the reaction apo-[ACP] + CoA = holo-[ACP] + adenosine 3',5'-bisphosphate + H(+). Its function is as follows. Transfers the 4'-phosphopantetheine moiety from coenzyme A to a Ser of acyl-carrier-protein. The sequence is that of Holo-[acyl-carrier-protein] synthase from Chlamydia trachomatis serovar L2 (strain ATCC VR-902B / DSM 19102 / 434/Bu).